Consider the following 291-residue polypeptide: Homoserine kinase (291 aa).

80–90 (RPSSGLGSSAA) serves as a coordination point for ATP.

It belongs to the GHMP kinase family. Homoserine kinase subfamily.

The protein localises to the cytoplasm. It catalyses the reaction L-homoserine + ATP = O-phospho-L-homoserine + ADP + H(+). The protein operates within amino-acid biosynthesis; L-threonine biosynthesis; L-threonine from L-aspartate: step 4/5. Its function is as follows. Catalyzes the ATP-dependent phosphorylation of L-homoserine to L-homoserine phosphate. The protein is Homoserine kinase of Haloquadratum walsbyi (strain DSM 16790 / HBSQ001).